Consider the following 199-residue polypeptide: Cutinase CUT1 (199 aa).

An N-terminal signal peptide occupies residues 1–18 (MKFTTLATLALGAVSALA). Positions 19–27 (APVTELESR) are excised as a propeptide. A Pyrrolidone carboxylic acid modification is found at Gln28. A disulfide bridge links Cys31 with Cys105. Ser116 functions as the Nucleophile in the catalytic mechanism. Cys164 and Cys171 form a disulfide bridge. Asp168 is a catalytic residue. His181 serves as the catalytic Proton donor/acceptor.

Belongs to the cutinase family. The 2 disulfide bonds play a critical role in holding the catalytic residues in juxta-position; reduction of the disulfide bridges results in the complete inactivation of the enzyme.

The catalysed reaction is cutin + H2O = cutin monomers.. Functionally, catalyzes the hydrolysis of complex carboxylic polyesters found in the cell wall of plants. Degrades cutin, a macromolecule that forms the structure of the plant cuticle. Also degrades suberin, a specialized macromolecule found in the cell wall of various plant tissues. The polypeptide is Cutinase CUT1 (Coprinopsis cinerea (Inky cap fungus)).